Reading from the N-terminus, the 169-residue chain is Succinate dehydrogenase cytochrome b560 subunit, mitochondrial (169 aa).

A mitochondrion-targeting transit peptide spans 1–29 (MAALLLRHVGRHCLRAHLSPQLCIRNAVP). Over 30–62 (LGTTAKEEMERFWSKNTTLNRPLSPHISIYGWS) the chain is Mitochondrial matrix. A helical transmembrane segment spans residues 63 to 92 (LPMAMSICHRGTGIALSAGVSLFGLSALLV). At 93–112 (PGSFESHLEFVKSLCLGPAL) the chain is on the mitochondrial intermembrane side. A helical transmembrane segment spans residues 113-137 (IHTAKFALVFPLMYHTWNGIRHLMW). H127 contacts heme b. Residues 138 to 144 (DLGKGLT) lie on the Mitochondrial matrix side of the membrane. Residues 145-166 (ISQLHQSGVAVLVLTVLSSVGL) traverse the membrane as a helical segment. Residues 167–169 (AAM) are Mitochondrial intermembrane-facing.

The protein belongs to the cytochrome b560 family. As to quaternary structure, component of complex II composed of four subunits: the flavoprotein (FP) SDHA, iron-sulfur protein (IP) SDHB, and a cytochrome b560 composed of SDHC and SDHD. Heme b serves as cofactor. In terms of processing, the N-terminus is blocked.

The protein localises to the mitochondrion inner membrane. The protein operates within carbohydrate metabolism; tricarboxylic acid cycle. Its function is as follows. Membrane-anchoring subunit of succinate dehydrogenase (SDH) that is involved in complex II of the mitochondrial electron transport chain and is responsible for transferring electrons from succinate to ubiquinone (coenzyme Q). SDH also oxidizes malate to the non-canonical enol form of oxaloacetate, enol-oxaloacetate. Enol-oxaloacetate, which is a potent inhibitor of the succinate dehydrogenase activity, is further isomerized into keto-oxaloacetate. The protein is Succinate dehydrogenase cytochrome b560 subunit, mitochondrial (SDHC) of Bos taurus (Bovine).